The chain runs to 355 residues: MSERATYAARRVLPDAPLLAAAEGRTPGRRPVWFMRQAGRSLPEYREIRSGIGMLESCFDPALVCEITMQPVRRHGVDAAILFSDIVVPLKAAGIDLDIVAGTGPVVANPVRSIADVAALPRLVPEEVGAVAQAVQLLTAELGSTPLIGFAGAPFTLASYLVEGGPSRNHERTKALMHSDPRTWHALLGTLADTTITFLQTQLRAGVDAIQLFDSWAGALSLAEYREFVLPHSERVFAEVESAKVPRIHFGVGTGELLGAMGEAGADVVGVDWRIPLDVAARRVGPGKALQGNLDPAVLFAGPAAVEKQVRRITAEADAALAAGATGHIFNLGHGVLPDTDPGALTALVELVHSL.

Substrate contacts are provided by residues 36 to 40 (RQAGR), Asp-85, Tyr-160, Ser-215, and His-334.

It belongs to the uroporphyrinogen decarboxylase family. In terms of assembly, homodimer.

It is found in the cytoplasm. It catalyses the reaction uroporphyrinogen III + 4 H(+) = coproporphyrinogen III + 4 CO2. It functions in the pathway porphyrin-containing compound metabolism; protoporphyrin-IX biosynthesis; coproporphyrinogen-III from 5-aminolevulinate: step 4/4. Its function is as follows. Catalyzes the decarboxylation of four acetate groups of uroporphyrinogen-III to yield coproporphyrinogen-III. In Rhodococcus jostii (strain RHA1), this protein is Uroporphyrinogen decarboxylase.